A 197-amino-acid chain; its full sequence is TLE family member 5 (197 aa).

The interval 166 to 197 (LSALGSQAHLSKEDKNGHDGDTHQEDDGEKSD) is CCN domain. The segment at 174 to 197 (HLSKEDKNGHDGDTHQEDDGEKSD) is disordered. The segment covering 175–197 (LSKEDKNGHDGDTHQEDDGEKSD) has biased composition (basic and acidic residues). Ser196 is subject to Phosphoserine.

Belongs to the WD repeat Groucho/TLE family. In terms of assembly, homooligomer and heterooligomer with other family members. Binds TCF7. Binds the NF-kappa-B subunit RELA. Interacts with PHF12. Interacts (via Q domain) with SIX3. Interacts with SIX6. In terms of processing, ubiquitinated by XIAP/BIRC4. Found predominantly in muscle, heart and Placenta. In fetal tissues, abundantly expressed in the heart, lung, kidney, brain and liver.

Its subcellular location is the nucleus. Functionally, transcriptional corepressor. Acts as a dominant repressor towards other family members. Inhibits NF-kappa-B-regulated gene expression. May be required for the initiation and maintenance of the differentiated state. Essential for the transcriptional repressor activity of SIX3 during retina and lens development. This chain is TLE family member 5, found in Homo sapiens (Human).